The chain runs to 338 residues: MEKQTVAVLGPGSWGTALSQVLNDNGHEVRIWGNLPEQINEINTHHTNKHYFKDVVLDENIIAYTDLAETLKDVDAILFVVPTKVTRLVAQQVAQTLDHKVIIMHASKGLEPDSHKRLSTILEEEIPEHLRSDIVVVSGPSHAEETIVRDLTLITAASKDLQTAQYVQKLFSNHYFRLYTNTDVIGVETAGALKNIIAVGAGALHGLGFGDNAKAAIIARGLAEITRLGVALGASPLTYSGLSGVGDLIVTGTSIHSRNWRAGDALGRGESLADIEANMGMVIEGISTTRAAYELAQELGVYMPITQAIYQVIYHGTNIKDAIYDIMNNEFKAENEWS.

Ser-13, Trp-14, and Lys-108 together coordinate NADPH. 3 residues coordinate sn-glycerol 3-phosphate: Lys-108, Gly-139, and Ser-141. Ala-143 serves as a coordination point for NADPH. Lys-194, Asp-247, Ser-257, Arg-258, and Asn-259 together coordinate sn-glycerol 3-phosphate. Lys-194 functions as the Proton acceptor in the catalytic mechanism. Arg-258 serves as a coordination point for NADPH. NADPH is bound by residues Val-282 and Glu-284.

Belongs to the NAD-dependent glycerol-3-phosphate dehydrogenase family.

Its subcellular location is the cytoplasm. It catalyses the reaction sn-glycerol 3-phosphate + NAD(+) = dihydroxyacetone phosphate + NADH + H(+). It carries out the reaction sn-glycerol 3-phosphate + NADP(+) = dihydroxyacetone phosphate + NADPH + H(+). Its pathway is membrane lipid metabolism; glycerophospholipid metabolism. Catalyzes the reduction of the glycolytic intermediate dihydroxyacetone phosphate (DHAP) to sn-glycerol 3-phosphate (G3P), the key precursor for phospholipid synthesis. This Streptococcus pneumoniae (strain Taiwan19F-14) protein is Glycerol-3-phosphate dehydrogenase [NAD(P)+].